An 85-amino-acid chain; its full sequence is Ice-structuring protein 4 (85 aa).

An N-terminal signal peptide occupies residues 1 to 21; sequence MRITEANPDPDAKAVPAAAAP.

Belongs to the type-I AFP family.

Its subcellular location is the secreted. Contributes to protect fish blood from freezing at subzero sea water temperatures. Lowers the blood freezing point. Binds to nascent ice crystals and prevents further growth. This Pseudopleuronectes americanus (Winter flounder) protein is Ice-structuring protein 4.